The sequence spans 308 residues: Lipoyl synthase (308 aa).

[4Fe-4S] cluster is bound by residues cysteine 48, cysteine 53, cysteine 59, cysteine 74, cysteine 78, cysteine 81, and serine 287. Positions 60-277 (WSRHTATYLA…RSVGEALGLF (218 aa)) constitute a Radical SAM core domain.

It belongs to the radical SAM superfamily. Lipoyl synthase family. [4Fe-4S] cluster is required as a cofactor.

Its subcellular location is the cytoplasm. It catalyses the reaction [[Fe-S] cluster scaffold protein carrying a second [4Fe-4S](2+) cluster] + N(6)-octanoyl-L-lysyl-[protein] + 2 oxidized [2Fe-2S]-[ferredoxin] + 2 S-adenosyl-L-methionine + 4 H(+) = [[Fe-S] cluster scaffold protein] + N(6)-[(R)-dihydrolipoyl]-L-lysyl-[protein] + 4 Fe(3+) + 2 hydrogen sulfide + 2 5'-deoxyadenosine + 2 L-methionine + 2 reduced [2Fe-2S]-[ferredoxin]. It functions in the pathway protein modification; protein lipoylation via endogenous pathway; protein N(6)-(lipoyl)lysine from octanoyl-[acyl-carrier-protein]: step 2/2. In terms of biological role, catalyzes the radical-mediated insertion of two sulfur atoms into the C-6 and C-8 positions of the octanoyl moiety bound to the lipoyl domains of lipoate-dependent enzymes, thereby converting the octanoylated domains into lipoylated derivatives. This Chlamydia muridarum (strain MoPn / Nigg) protein is Lipoyl synthase.